The sequence spans 333 residues: Uroporphyrinogen decarboxylase (333 aa).

Residues 22–26 (RQAGR), Asp71, Tyr145, Ser200, and His310 each bind substrate.

The protein belongs to the uroporphyrinogen decarboxylase family. In terms of assembly, homodimer.

The protein resides in the cytoplasm. The enzyme catalyses uroporphyrinogen III + 4 H(+) = coproporphyrinogen III + 4 CO2. It participates in porphyrin-containing compound metabolism; protoporphyrin-IX biosynthesis; coproporphyrinogen-III from 5-aminolevulinate: step 4/4. In terms of biological role, catalyzes the decarboxylation of four acetate groups of uroporphyrinogen-III to yield coproporphyrinogen-III. The protein is Uroporphyrinogen decarboxylase of Thermoplasma acidophilum (strain ATCC 25905 / DSM 1728 / JCM 9062 / NBRC 15155 / AMRC-C165).